The primary structure comprises 274 residues: tRNA pseudouridine synthase A (274 aa).

Residue D51 is the Nucleophile of the active site. Residue Y109 coordinates substrate.

It belongs to the tRNA pseudouridine synthase TruA family. Homodimer.

It catalyses the reaction uridine(38/39/40) in tRNA = pseudouridine(38/39/40) in tRNA. Formation of pseudouridine at positions 38, 39 and 40 in the anticodon stem and loop of transfer RNAs. This is tRNA pseudouridine synthase A from Acidovorax sp. (strain JS42).